Here is a 218-residue protein sequence, read N- to C-terminus: N-(5'-phosphoribosyl)anthranilate isomerase (218 aa).

This sequence belongs to the TrpF family.

It carries out the reaction N-(5-phospho-beta-D-ribosyl)anthranilate = 1-(2-carboxyphenylamino)-1-deoxy-D-ribulose 5-phosphate. It participates in amino-acid biosynthesis; L-tryptophan biosynthesis; L-tryptophan from chorismate: step 3/5. The chain is N-(5'-phosphoribosyl)anthranilate isomerase from Bordetella pertussis (strain Tohama I / ATCC BAA-589 / NCTC 13251).